The sequence spans 149 residues: Calmodulin (149 aa).

EF-hand domains follow at residues 8–43 (EQIS…LGQN), 44–79 (PTEA…KMQD), 81–116 (DSEE…LGEK), and 117–149 (LTDE…MMSK). Ca(2+) is bound by residues aspartate 21, aspartate 23, aspartate 25, threonine 27, glutamate 32, aspartate 57, aspartate 59, serine 61, threonine 63, glutamate 68, aspartate 94, aspartate 96, asparagine 98, and glutamate 105. Lysine 116 is modified (N6,N6,N6-trimethyllysine). 5 residues coordinate Ca(2+): aspartate 130, aspartate 132, aspartate 134, glutamine 136, and glutamate 141.

This sequence belongs to the calmodulin family.

Its function is as follows. Calmodulin mediates the control of a large number of enzymes, ion channels and other proteins by Ca(2+). Among the enzymes to be stimulated by the calmodulin-Ca(2+) complex are a number of protein kinases and phosphatases. The sequence is that of Calmodulin from Trypanosoma brucei brucei.